A 326-amino-acid chain; its full sequence is Vacuolar protein sorting-associated protein 26A (326 aa).

This sequence belongs to the VPS26 family. In terms of assembly, component of the heterotrimeric retromer cargo-selective complex (CSC) which is believed to associate with variable sorting nexins to form functionally distinct retromer complex variants.

It localises to the cytoplasm. It is found in the endosome membrane. Its subcellular location is the early endosome. Functionally, acts as a component of the retromer cargo-selective complex (CSC). The CSC is believed to be the core functional component of retromer or respective retromer complex variants acting to prevent missorting of selected transmembrane cargo proteins into the lysosomal degradation pathway. Retromer mediates retrograde transport of cargo proteins from endosomes to the trans-Golgi network (TGN). The chain is Vacuolar protein sorting-associated protein 26A (vps26a) from Xenopus tropicalis (Western clawed frog).